A 162-amino-acid chain; its full sequence is MSTNIITTEGHEALKKELDHLWRVYRPEITQKVAWAASLGDRSENADYQYNKKLLREIDRRVRYLRKRLEDVKVVAYSPEQEGKVFFGAWVEIENDEGETMKFRIVGYDEIYGRNDYISIDSPMARALLKKEEGDEVVVHTPTGEATWYVSSIRYGQGVSTD.

A coiled-coil region spans residues 52–73 (KKLLREIDRRVRYLRKRLEDVK).

Belongs to the GreA/GreB family. GreB subfamily.

Necessary for efficient RNA polymerase transcription elongation past template-encoded arresting sites. The arresting sites in DNA have the property of trapping a certain fraction of elongating RNA polymerases that pass through, resulting in locked ternary complexes. Cleavage of the nascent transcript by cleavage factors such as GreA or GreB allows the resumption of elongation from the new 3'terminus. GreB releases sequences of up to 9 nucleotides in length. This chain is Transcription elongation factor GreB, found in Pseudomonas putida (strain ATCC 47054 / DSM 6125 / CFBP 8728 / NCIMB 11950 / KT2440).